We begin with the raw amino-acid sequence, 409 residues long: Glycosaminoglycan xylosylkinase (409 aa).

Residues Met1–Arg6 are Cytoplasmic-facing. Residues Val7–Ile25 traverse the membrane as a helical; Signal-anchor for type II membrane protein segment. The Lumenal segment spans residues Asp26 to Leu409. Residues Gln107 and Lys123 each coordinate ATP. A Mn(2+)-binding site is contributed by Asp142. N-linked (GlcNAc...) asparagine glycosylation is present at Asn193. 2 disulfides stabilise this stretch: Cys196–Cys211 and Cys201–Cys204. An ATP-binding site is contributed by Thr222–Leu225. 2 disulfides stabilise this stretch: Cys257–Cys331 and Cys332–Cys389. The active site involves Asp289. Positions 294 and 309 each coordinate ATP. Residue Asp309 coordinates Mn(2+).

The protein belongs to the FAM20 family. Mn(2+) is required as a cofactor. As to expression, widely expressed. Strongly expressed in pancreas, spleen and fetal liver.

Its subcellular location is the golgi apparatus membrane. It carries out the reaction 3-O-(beta-D-galactosyl-(1-&gt;3)-beta-D-galactosyl-(1-&gt;4)-beta-D-xylosyl)-L-seryl-[protein] + ATP = 3-O-(beta-D-galactosyl-(1-&gt;3)-beta-D-galactosyl-(1-&gt;4)-beta-D-2-O-phosphoxylosyl)-L-seryl-[protein] + ADP + H(+). In terms of biological role, responsible for the 2-O-phosphorylation of xylose in the glycosaminoglycan-protein linkage region of proteoglycans thereby regulating the amount of mature GAG chains. Sulfated glycosaminoglycans (GAGs), including heparan sulfate and chondroitin sulfate, are synthesized on the so-called common GAG-protein linkage region (GlcUAbeta1-3Galbeta1-3Galbeta1-4Xylbeta1-O-Ser) of core proteins, which is formed by the stepwise addition of monosaccharide residues by the respective specific glycosyltransferases. Xylose 2-O-phosphorylation may influence the catalytic activity of B3GAT3 (GlcAT-I) which completes the precursor tetrasaccharide of GAG-protein linkage regions on which the repeating disaccharide region is synthesized. The chain is Glycosaminoglycan xylosylkinase from Homo sapiens (Human).